The primary structure comprises 479 residues: Sulfate adenylyltransferase subunit 1 (479 aa).

Residues K25–R239 enclose the tr-type G domain. A G1 region spans residues G34–S41. G34–S41 contributes to the GTP binding site. Residues G92–D96 form a G2 region. The tract at residues D113–G116 is G3. GTP is bound by residues D113 to H117 and N168 to D171. Residues N168–D171 form a G4 region. The tract at residues S206 to L208 is G5.

The protein belongs to the TRAFAC class translation factor GTPase superfamily. Classic translation factor GTPase family. CysN/NodQ subfamily. Heterodimer composed of CysD, the smaller subunit, and CysN.

It catalyses the reaction sulfate + ATP + H(+) = adenosine 5'-phosphosulfate + diphosphate. The protein operates within sulfur metabolism; hydrogen sulfide biosynthesis; sulfite from sulfate: step 1/3. With CysD forms the ATP sulfurylase (ATPS) that catalyzes the adenylation of sulfate producing adenosine 5'-phosphosulfate (APS) and diphosphate, the first enzymatic step in sulfur assimilation pathway. APS synthesis involves the formation of a high-energy phosphoric-sulfuric acid anhydride bond driven by GTP hydrolysis by CysN coupled to ATP hydrolysis by CysD. The polypeptide is Sulfate adenylyltransferase subunit 1 (Salmonella typhimurium (strain LT2 / SGSC1412 / ATCC 700720)).